Here is a 318-residue protein sequence, read N- to C-terminus: 4-hydroxy-3-methylbut-2-enyl diphosphate reductase (318 aa).

Cys12 is a [4Fe-4S] cluster binding site. (2E)-4-hydroxy-3-methylbut-2-enyl diphosphate is bound by residues His41 and His74. The dimethylallyl diphosphate site is built by His41 and His74. Residues His41 and His74 each contribute to the isopentenyl diphosphate site. Cys96 is a binding site for [4Fe-4S] cluster. His124 provides a ligand contact to (2E)-4-hydroxy-3-methylbut-2-enyl diphosphate. Residue His124 participates in dimethylallyl diphosphate binding. His124 serves as a coordination point for isopentenyl diphosphate. Residue Glu126 is the Proton donor of the active site. Thr167 serves as a coordination point for (2E)-4-hydroxy-3-methylbut-2-enyl diphosphate. Cys197 provides a ligand contact to [4Fe-4S] cluster. 4 residues coordinate (2E)-4-hydroxy-3-methylbut-2-enyl diphosphate: Ser225, Ser226, Asn227, and Ser269. Positions 225, 226, 227, and 269 each coordinate dimethylallyl diphosphate. Residues Ser225, Ser226, Asn227, and Ser269 each contribute to the isopentenyl diphosphate site.

It belongs to the IspH family. The cofactor is [4Fe-4S] cluster.

It carries out the reaction isopentenyl diphosphate + 2 oxidized [2Fe-2S]-[ferredoxin] + H2O = (2E)-4-hydroxy-3-methylbut-2-enyl diphosphate + 2 reduced [2Fe-2S]-[ferredoxin] + 2 H(+). The catalysed reaction is dimethylallyl diphosphate + 2 oxidized [2Fe-2S]-[ferredoxin] + H2O = (2E)-4-hydroxy-3-methylbut-2-enyl diphosphate + 2 reduced [2Fe-2S]-[ferredoxin] + 2 H(+). It functions in the pathway isoprenoid biosynthesis; dimethylallyl diphosphate biosynthesis; dimethylallyl diphosphate from (2E)-4-hydroxy-3-methylbutenyl diphosphate: step 1/1. The protein operates within isoprenoid biosynthesis; isopentenyl diphosphate biosynthesis via DXP pathway; isopentenyl diphosphate from 1-deoxy-D-xylulose 5-phosphate: step 6/6. Catalyzes the conversion of 1-hydroxy-2-methyl-2-(E)-butenyl 4-diphosphate (HMBPP) into a mixture of isopentenyl diphosphate (IPP) and dimethylallyl diphosphate (DMAPP). Acts in the terminal step of the DOXP/MEP pathway for isoprenoid precursor biosynthesis. This chain is 4-hydroxy-3-methylbut-2-enyl diphosphate reductase, found in Francisella philomiragia subsp. philomiragia (strain ATCC 25017 / CCUG 19701 / FSC 153 / O#319-036).